Reading from the N-terminus, the 297-residue chain is Adrenocorticotropic hormone receptor (297 aa).

Residues 1-23 (MKHIINSYENINNTARNNSDCPR) lie on the Extracellular side of the membrane. 2 N-linked (GlcNAc...) asparagine glycosylation sites follow: Asn12 and Asn17. 2 cysteine pairs are disulfide-bonded: Cys21-Cys253 and Cys245-Cys251. A helical transmembrane segment spans residues 24–49 (VVLPEEIFFTISIVGVLENLIVLLAV). Over 50–58 (FKNKNLQAP) the chain is Cytoplasmic. A helical membrane pass occupies residues 59–79 (MYFFICSLAISDMLGSLYKIL). Over 80–104 (ENILIILRNMGYLKPRGSFETTADD) the chain is Extracellular. A helical transmembrane segment spans residues 105–126 (IIDSLFVLSLLGSIFSLSVIAA). Over 127–147 (DRYITIFHALRYHSIVTMRRT) the chain is Cytoplasmic. The helical transmembrane segment at 148–168 (VVVLTVIWTFCTGTGITMVIF) threads the bilayer. At 169-180 (SHHVPTVITFTS) the chain is on the extracellular side. Residues 181–199 (LFPLMLVFILCLYVHMFLL) traverse the membrane as a helical segment. The Cytoplasmic portion of the chain corresponds to 200-217 (ARSHTRKISTLPRANMKG). The chain crosses the membrane as a helical span at residues 218–244 (AITLTILLGVFIFCWAPFVLHVLLMTF). Over 245–256 (CPSNPYCACYMS) the chain is Extracellular. A helical membrane pass occupies residues 257–278 (LFQVNGMLIMCNAVIDPFIYAF). The Cytoplasmic segment spans residues 279–297 (RSPELRDAFKKMIFCSRYW). Cys293 is lipidated: S-palmitoyl cysteine.

This sequence belongs to the G-protein coupled receptor 1 family. As to quaternary structure, homodimer. Interacts with corticotropin (ACTH). Interacts with MRAP; this interaction targets MC2R to the plasma membrane. Interacts with MRAP2; competing with MRAP for binding to MC2R and impairing the binding of corticotropin (ACTH). In terms of processing, ubiquitinated by MGRN1 that may be involved in post-endocytic trafficking and/or degradation of internalized receptor. As to expression, melanocytes and corticoadrenal tissue.

It localises to the cell membrane. Its function is as follows. Hormone receptor primarily expressed in adrenal cortex that plays a key role in regulating adrenocortical function. Upon corticotropin (ACTH) binding, facilitates the release of adrenal glucocorticoids, including cortisol and corticosterone. In addition, MC2R is required for fetal and neonatal adrenal gland development. Mechanistically, activates adenylate cyclase (cAMP), the MAPK cascade as well as the cAMP-dependent protein kinase A pathway leading to steroidogenic factor 1/NR5A1-mediated transcriptional activation. The sequence is that of Adrenocorticotropic hormone receptor (MC2R) from Homo sapiens (Human).